The primary structure comprises 238 residues: tRNA (guanine-N(7)-)-methyltransferase (238 aa).

Positions 71, 96, 123, and 146 each coordinate S-adenosyl-L-methionine. D146 is an active-site residue. Substrate contacts are provided by residues K150, D182, and 217-220 (TKFE).

The protein belongs to the class I-like SAM-binding methyltransferase superfamily. TrmB family.

It carries out the reaction guanosine(46) in tRNA + S-adenosyl-L-methionine = N(7)-methylguanosine(46) in tRNA + S-adenosyl-L-homocysteine. It participates in tRNA modification; N(7)-methylguanine-tRNA biosynthesis. Catalyzes the formation of N(7)-methylguanine at position 46 (m7G46) in tRNA. In Methylobacillus flagellatus (strain ATCC 51484 / DSM 6875 / VKM B-1610 / KT), this protein is tRNA (guanine-N(7)-)-methyltransferase.